The sequence spans 155 residues: Transcriptional repressor NrdR (155 aa).

A zinc finger spans residues 3 to 34 (CPYCQNADTRVVDSRLIGEGEQVRRRRQCPSC). The region spanning 49–139 (PRVVKSDGRR…VYRRFEDVGA (91 aa)) is the ATP-cone domain.

This sequence belongs to the NrdR family. The cofactor is Zn(2+).

Its function is as follows. Negatively regulates transcription of bacterial ribonucleotide reductase nrd genes and operons by binding to NrdR-boxes. The protein is Transcriptional repressor NrdR of Halorhodospira halophila (strain DSM 244 / SL1) (Ectothiorhodospira halophila (strain DSM 244 / SL1)).